The following is a 37-amino-acid chain: Hemocyanin subunit B (37 aa).

The protein belongs to the tyrosinase family. Hemocyanin subfamily. Hemolymph.

The protein localises to the secreted. It localises to the extracellular space. In terms of biological role, hemocyanins are copper-containing oxygen carriers occurring freely dissolved in the hemolymph of many mollusks and arthropods. The chain is Hemocyanin subunit B from Cancer pagurus (Rock crab).